A 300-amino-acid chain; its full sequence is SNAP25 homologous protein SNAP33 (300 aa).

Disordered stretches follow at residues 1–76 (MFGL…QSLF) and 176–228 (WKPK…PESA). Phosphoserine is present on serine 29. Residues 38–49 (TLNPSKRTTSEP) are compositionally biased toward polar residues. The span at 190-208 (TRDDSPTRRVNHLEKREKL) shows a compositional bias: basic and acidic residues. In terms of domain architecture, t-SNARE coiled-coil homology spans 235–297 (EMEKAKQDDG…QQSNQRGRRL (63 aa)).

This sequence belongs to the SNAP-25 family. As to quaternary structure, interacts with the cytokinesis-specific syntaxin KNOLLE and with SYP121. Binds to EXO70B2. In terms of tissue distribution, ubiquitous, with a strong expression in root tips, ovules, very young leaves, vascular tissue, hydathodes, stipules and the abscission and dehiscence zones of the siliques.

It is found in the membrane. T-SNARE involved in diverse vesicle trafficking and membrane fusion processes, including cell plate formation. May function in the secretory pathway. This Arabidopsis thaliana (Mouse-ear cress) protein is SNAP25 homologous protein SNAP33.